The chain runs to 450 residues: MAAPPLGRLVLTHLLVALFGMGSWIAVNGIWVELPVVVKELPEGWSLPSYLSVLVALGNLGLLLVTLWRRLAPGKSERIPIQVVQGLSIVGTGLLAPLWSNMALVAGQLHSVAFLTLAFVLALSCCASNVTFLPFLSHLPPPFLRSFFLGQGLSALLPCVLALAQGVGRLECLHVPANGTTGPPIKVSPINFPERFSAGTFFWVLTALLGTSAAAFQGLLLLLPSPPPEATMGTGLRVETPGTEEEEEEEEASPLQEPPGQVASIVSSPDPKAHRLFSSRSACLLGLLAITNALTNGVLPAVQSFSCLPYGRLAYHLAVVLGSSANPLACFLAMAVLCRSLAGLYGLCLLGMFFGTYLMTLAVLSPCPPLVGTSAGVVLVVLSWVLCAGVFSYIKVATSSMLHSGGRPALLAAGVAIQVGSLLGAIAMFPPTSVYPVFRSGEDCVDQCGP.

5 consecutive transmembrane segments (helical) span residues 14 to 34 (LLVA…WVEL), 47 to 67 (LPSY…LVTL), 79 to 99 (IPIQ…APLW), 114 to 136 (FLTL…LPFL), and 147 to 167 (FFLG…AQGV). An N-linked (GlcNAc...) asparagine glycan is attached at asparagine 178. The helical transmembrane segment at 201–221 (FFWVLTALLGTSAAAFQGLLL) threads the bilayer. Residues 230–268 (ATMGTGLRVETPGTEEEEEEEEASPLQEPPGQVASIVSS) form a disordered region. Over residues 242–252 (GTEEEEEEEEA) the composition is skewed to acidic residues. The next 5 membrane-spanning stretches (helical) occupy residues 282–302 (ACLL…LPAV), 317–337 (LAVV…MAVL), 344–364 (LYGL…LAVL), 371–391 (VGTS…AGVF), and 409–429 (ALLA…IAMF).

The protein belongs to the riboflavin transporter family. Highly expressed in the placenta and small intestine, moderately in the kidney, colon, lung, prostate, uterus, and thymus, and weakly in all other tissues.

It is found in the cell membrane. It carries out the reaction riboflavin(in) = riboflavin(out). With respect to regulation, riboflavin transport is Na(+)-independent but moderately pH-sensitive. Activity is strongly inhibited by riboflavin analogs, such as lumiflavin. Weakly inhibited by flavin adenine dinucleotide (FAD) and flavin mononucleotide (FMN). Its function is as follows. Plasma membrane transporter mediating the uptake by cells of the water soluble vitamin B2/riboflavin that plays a key role in biochemical oxidation-reduction reactions of the carbohydrate, lipid, and amino acid metabolism. May also act as a receptor for 4-hydroxybutyrate. The sequence is that of Solute carrier family 52, riboflavin transporter, member 2 (Slc52a2) from Rattus norvegicus (Rat).